The sequence spans 150 residues: Helix-loop-helix protein hlh-12 (150 aa).

The tract at residues 1–24 (MAKKPRVTKLNTDRRSRANERERQ) is disordered. Residues 11–24 (NTDRRSRANERERQ) show a composition bias toward basic and acidic residues. The segment at 13 to 26 (DRRSRANERERQRV) is basic motif. Residues 13-65 (DRRSRANERERQRVSEMNGMFDVLLNLLPPSHFKTRLSRVQILREATSYIIRL) form the bHLH domain. Positions 27 to 65 (SEMNGMFDVLLNLLPPSHFKTRLSRVQILREATSYIIRL) are helix-loop-helix motif.

As to quaternary structure, forms a heterodimer with helix-loop-helix protein hlh-2.

It is found in the nucleus. Functionally, transcription factor which binds the E box motif 5'-GCAGGTG-3'. Involved in migration of the gonadal leader cells; distal tip cells (DTCs) in hermaphrodites, and linker cells in males. Positively regulates expression of alpha integrin ina-1 and ADAMTS protease gon-1. In Caenorhabditis elegans, this protein is Helix-loop-helix protein hlh-12.